We begin with the raw amino-acid sequence, 587 residues long: F-box/WD repeat-containing protein sel-10 (587 aa).

Over residues 1 to 11 (MWPRNDVHMDD) the composition is skewed to basic and acidic residues. Positions 1 to 53 (MWPRNDVHMDDGSMTPEDQEPVTDNDMEYNDNGEESSYSNGSSSSYNADKLSS) are disordered. The segment covering 17–34 (EDQEPVTDNDMEYNDNGE) has biased composition (acidic residues). Residues 35 to 47 (ESSYSNGSSSSYN) show a composition bias toward low complexity. The region spanning 121-167 (RDFLSCLPVELGMKILHNLTGYDLLKVAQVSKNWKLISEIDKIWKSL) is the F-box domain. WD repeat units follow at residues 253 to 291 (GHED…VMYT), 294 to 333 (GHTG…LLHT), 336 to 373 (GHTS…HLAT), 376 to 415 (GHHA…RTLT), 416 to 455 (GHNN…GQEC), 461 to 498 (GHTS…CVHM), and 501 to 539 (GHRS…LIRD).

Probable component of the SCF(sel-10) E3 ubiquitin-protein ligase complex which includes skr-1 and F-box domain-containing protein sel-10 as a substrate recognition component. Interacts with fem-1, fem-2, and fem-3. Interacts with the intracellular domain of glp-1 and sel-12. Interacts with lin-12. Interacts with skr-1. Interacts with zyg-1. In terms of tissue distribution, expressed in tail and head neurons.

It is found in the cell projection. Its subcellular location is the axon. The protein localises to the cytoplasm. Probable substrate recognition component of SCF (SKP1-CUL-F-box protein) E3 ubiquitin-protein ligase complex, which mediates the ubiquitination and subsequent proteasomal degradation of target proteins. Regulates synapse elimination in early development in the motor neuron HSNL. Cell autonomous negative regulator of lin-12/Notch-mediated signaling, with respect to lin-12 activity in cell fate decisions and tumorigenesis. May target the intracellular domains of lin-12/Notch proteins for ubiquitin-dependent degradation. Involved in sex determination by promoting female development. Potential regulator of presenilin. May have a role in egg laying. Regulates zyg-1 levels (possibly redundantly with lin-23) to control centrosome duplication during mitosis. Negatively regulates lin-45 activity and protein stability, probably by targeting it for ubiquitination and proteasomal degradation. This is F-box/WD repeat-containing protein sel-10 from Caenorhabditis elegans.